Consider the following 488-residue polypeptide: Glutamyl-tRNA(Gln) amidotransferase subunit A (488 aa).

Catalysis depends on charge relay system residues Lys77 and Ser152. The active-site Acyl-ester intermediate is the Ser176.

The protein belongs to the amidase family. GatA subfamily. Heterotrimer of A, B and C subunits.

It carries out the reaction L-glutamyl-tRNA(Gln) + L-glutamine + ATP + H2O = L-glutaminyl-tRNA(Gln) + L-glutamate + ADP + phosphate + H(+). Its function is as follows. Allows the formation of correctly charged Gln-tRNA(Gln) through the transamidation of misacylated Glu-tRNA(Gln) in organisms which lack glutaminyl-tRNA synthetase. The reaction takes place in the presence of glutamine and ATP through an activated gamma-phospho-Glu-tRNA(Gln). The polypeptide is Glutamyl-tRNA(Gln) amidotransferase subunit A (Streptococcus pyogenes serotype M3 (strain ATCC BAA-595 / MGAS315)).